The primary structure comprises 43 residues: Iota-conotoxin-like S11.2 (43 aa).

Cystine bridges form between cysteine 2-cysteine 16, cysteine 9-cysteine 19, cysteine 15-cysteine 24, and cysteine 18-cysteine 35. Position 41 is a D-methionine (methionine 41). Arginine 43 is a propeptide (removed by a carboxypeptidase).

The protein belongs to the conotoxin I1 superfamily. In terms of tissue distribution, expressed by the venom duct.

It localises to the secreted. Functionally, iota-conotoxins bind to voltage-gated sodium channels (Nav) and act as agonists by shifting the voltage-dependence of activation to more hyperpolarized levels. Produces general excitatory symptoms. This is Iota-conotoxin-like S11.2 from Conus striatus (Striated cone).